Here is a 78-residue protein sequence, read N- to C-terminus: Exodeoxyribonuclease 7 small subunit (78 aa).

This sequence belongs to the XseB family. As to quaternary structure, heterooligomer composed of large and small subunits.

It localises to the cytoplasm. The enzyme catalyses Exonucleolytic cleavage in either 5'- to 3'- or 3'- to 5'-direction to yield nucleoside 5'-phosphates.. Functionally, bidirectionally degrades single-stranded DNA into large acid-insoluble oligonucleotides, which are then degraded further into small acid-soluble oligonucleotides. The polypeptide is Exodeoxyribonuclease 7 small subunit (Synechococcus sp. (strain JA-2-3B'a(2-13)) (Cyanobacteria bacterium Yellowstone B-Prime)).